Reading from the N-terminus, the 325-residue chain is Protein ORANGE-ORANGE, chloroplastic (325 aa).

A chloroplast-targeting transit peptide spans 1–54 (MDRVLVASYPINHLIRPHSFRIDYCWSTCFTSRLNSGKERQKLSSRWRWRSMAS). Over residues 53-71 (ASDSTDSSSSSSFAPSVES) the composition is skewed to low complexity. The tract at residues 53-77 (ASDSTDSSSSSSFAPSVESDPSDKT) is disordered. Transmembrane regions (helical) follow at residues 164–184 (LYYV…GLLA) and 217–237 (IVAS…VVEV). Residues 226–317 (VGVISALMVV…CTGMAMASEH (92 aa)) are CR-type-like. The CXXCXGXG motif repeat unit spans residues 248 to 255 (CKYCLGTG). One copy of the CXXCXXXG motif repeat lies at 259–266 (CARCSNTG). The stretch at 292–299 (CQNCSGSG) is one CXXCXGXG motif repeat. One copy of the CXXCXXXG motif repeat lies at 303-310 (CPTCLCTG).

Belongs to the orange-like family.

The protein localises to the plastid. The protein resides in the chloroplast membrane. In terms of biological role, triggers accumulation of carotenoids, mainly beta-carotene, in fruit flesh. The polypeptide is Protein ORANGE-ORANGE, chloroplastic (Cucumis melo (Muskmelon)).